The sequence spans 489 residues: MPRVYIGRLSYQARERDVERFFKGYGKILEVDLKNGYGFVEFDDLRDADDAVYELNGKDLCGERVIVEHARGPRRDGSYGSGRSGYGYRRSGRDKYGPPTRTEYRLIVENLSSRCSWQDLKDYMRQAGEVTYADAHKGRKNEGVIEFVSYSDMKRALEKLDGTEVNGRKIRLVEDKPGSRRRRSYSRSRSHSRSRSRSRHSRKSRSRSGSSKSSHSKSRSRSRSGSHSRSKSRSRSQSRSRSKKEKSRSPSKDNKSRSRSRSPDKSRSKSKDHAEDKLQNNDSAGKAKSHSPSRHDSKSRSRSQERRAEEERRRSVSRARSQEKSRSQEKSLLKSRSRSRSRSRSRSKDKRKGRKRSRDESRSRSRSKSERSRKHSSKRDSKVSSSSSSSKKKKDTDHSRSPSRSVSKEREHAKAESGQRGSRAEGESEAPNPEPRARSRSTSKSKPNVPAESRSRSKSASKTRSRSKSPSRSASRSPSRSRSRSHSRS.

An RRM 1 domain is found at 2-72; the sequence is PRVYIGRLSY…ERVIVEHARG (71 aa). Disordered stretches follow at residues 72 to 95 and 169 to 489; these read GPRRDGSYGSGRSGYGYRRSGRDK and KIRL…HSRS. 2 positions are modified to phosphoserine: Ser78 and Ser84. The RRM 2 domain maps to 104-177; the sequence is YRLIVENLSS…RKIRLVEDKP (74 aa). Basic residues-rich tracts occupy residues 179-206 and 214-246; these read SRRRRSYSRSRSHSRSRSRSRHSRKSRS and SHSKSRSRSRSGSHSRSKSRSRSQSRSRSKKEK. Residues 247-279 are compositionally biased toward basic and acidic residues; sequence SRSPSKDNKSRSRSRSPDKSRSKSKDHAEDKLQ. Ser289, Ser291, and Ser293 each carry phosphoserine. The segment covering 293-332 has biased composition (basic and acidic residues); the sequence is SRHDSKSRSRSQERRAEEERRRSVSRARSQEKSRSQEKSL. Basic residues predominate over residues 333 to 356; the sequence is LKSRSRSRSRSRSRSKDKRKGRKR. 2 stretches are compositionally biased toward basic and acidic residues: residues 357-370 and 394-426; these read SRDESRSRSRSKSE and KDTDHSRSPSRSVSKEREHAKAESGQRGSRAEG. Residues Ser441, Ser453, and Ser455 each carry the phosphoserine modification. Composition is skewed to basic residues over residues 456-469 and 479-489; these read RSKSASKTRSRSKS and SRSRSRSHSRS.

The protein belongs to the splicing factor SR family. As to quaternary structure, found in a pre-mRNA splicing complex with SRSF4/SFRS4, SRSF5/SFRS5, SNRNP70, SNRPA1, SRRM1 and SRRM2. Interacts with PNN. In terms of processing, extensively phosphorylated on serine residues in the RS domain.

Its subcellular location is the nucleus speckle. In terms of biological role, plays a role in alternative splice site selection during pre-mRNA splicing. Represses the splicing of MAPT/Tau exon 10. The sequence is that of Serine/arginine-rich splicing factor 4 (Srsf4) from Mus musculus (Mouse).